The primary structure comprises 952 residues: Meiotic coiled-coil protein 3 (952 aa).

Coiled coils occupy residues 283–611, 684–716, and 839–942; these read QLLQ…KEHL, TKKF…EDKL, and SLEN…RERE.

The protein resides in the cytoplasm. Has a role in meiosis. The chain is Meiotic coiled-coil protein 3 (mcp3) from Schizosaccharomyces pombe (strain 972 / ATCC 24843) (Fission yeast).